Here is an 88-residue protein sequence, read N- to C-terminus: Small ribosomal subunit protein uS15 (88 aa).

This sequence belongs to the universal ribosomal protein uS15 family. Part of the 30S ribosomal subunit. Forms a bridge to the 50S subunit in the 70S ribosome, contacting the 23S rRNA.

One of the primary rRNA binding proteins, it binds directly to 16S rRNA where it helps nucleate assembly of the platform of the 30S subunit by binding and bridging several RNA helices of the 16S rRNA. In terms of biological role, forms an intersubunit bridge (bridge B4) with the 23S rRNA of the 50S subunit in the ribosome. In Syntrophus aciditrophicus (strain SB), this protein is Small ribosomal subunit protein uS15.